A 565-amino-acid chain; its full sequence is Nephrocystin-1 (565 aa).

The segment covering 1-32 (GEEEDEEEEEEEESEEGGGEEEESEEEEEEKQ) has biased composition (acidic residues). Disordered stretches follow at residues 1–46 (GEEE…KEYI) and 95–132 (VEPY…KQRT). A coiled-coil region spans residues 2-48 (EEEDEEEEEEEESEEGGGEEEESEEEEEEKQENESHHQATSKEYIAV). Ser14 carries the post-translational modification Phosphoserine. An SH3 domain is found at 40–100 (ATSKEYIAVG…PRTYVEPYNK (61 aa)). Residues 104–118 (QDTSEEEDSEEDVEV) show a composition bias toward acidic residues. Tyr182 carries the post-translational modification Phosphotyrosine; by FAK2. Tyr554 bears the Phosphotyrosine; by SRC mark.

It belongs to the nephrocystin-1 family. In terms of assembly, interacts with Crk-associated substrate BCAR1, NPHP4, PTK2B/PYK2 and tensin. Interacts with INVS and NPHP3. Interacts with AHI1 and TNK2. Interacts with NPHP4 in a complex containing NPHP1, NPHP4 and RPGRIP1L/NPHP8. Interacts with IQCB1; the interaction likely requires additional interactors. Interacts with KIF7. Interacts with ANKS3. Interacts with SPATA7. Interacts with FLNA. Expressed in renal cells (at protein level).

The protein localises to the cell junction. It localises to the adherens junction. It is found in the cell projection. The protein resides in the cilium. Its subcellular location is the cytoplasm. The protein localises to the cytoskeleton. It localises to the cilium axoneme. It is found in the tight junction. Its function is as follows. Together with BCAR1 it may play a role in the control of epithelial cell polarity. Involved in the organization of apical junctions in kidney cells together with NPHP4 and RPGRIP1L/NPHP8. Does not seem to be strictly required for ciliogenesis. Seems to help to recruit PTK2B/PYK2 to cell matrix adhesions, thereby initiating phosphorylation of PTK2B/PYK2 and PTK2B/PYK2-dependent signaling. May play a role in the regulation of intraflagellar transport (IFT) during cilia assembly. Required for normal retina development. In connecting photoreceptor cilia influences the movement of some IFT proteins such as IFT88 and WDR19. Involved in spermatogenesis. The sequence is that of Nephrocystin-1 (NPHP1) from Canis lupus familiaris (Dog).